We begin with the raw amino-acid sequence, 225 residues long: Putative membrane protease YugP (225 aa).

H95 contacts Zn(2+). Residue E96 is part of the active site. Positions 99 and 103 each coordinate Zn(2+). The next 3 helical transmembrane spans lie at 116 to 138, 140 to 162, and 192 to 212; these read IFPV…MLLG, LNLI…ITLP, and VLSA…FELL.

Its subcellular location is the cell membrane. The sequence is that of Putative membrane protease YugP (yugP) from Bacillus subtilis (strain 168).